The chain runs to 433 residues: Delta-aminolevulinic acid dehydratase, chloroplastic (433 aa).

The transit peptide at 1–56 (MASTFNIPCNAGTIKNFNNSQRNLGFSSNLGINFAKTRFSNCGDSGRIPSQLVVRA) directs the protein to the chloroplast. Residues 83-115 (NAPSAPPVPPTPKAPSGTPSVSPLSLGRRPRRN) form a disordered region. Residues 86-95 (SAPPVPPTPK) are compositionally biased toward pro residues. Residue lysine 301 is the Schiff-base intermediate with substrate of the active site. 5-aminolevulinate contacts are provided by arginine 311 and lysine 323. Residue glutamate 339 participates in Mg(2+) binding. Lysine 354 acts as the Schiff-base intermediate with substrate in catalysis. Positions 380 and 419 each coordinate 5-aminolevulinate.

The protein belongs to the ALAD family. In terms of assembly, homooctamer. Mg(2+) serves as cofactor.

It localises to the plastid. The protein localises to the chloroplast. It carries out the reaction 2 5-aminolevulinate = porphobilinogen + 2 H2O + H(+). It participates in porphyrin-containing compound metabolism; protoporphyrin-IX biosynthesis; coproporphyrinogen-III from 5-aminolevulinate: step 1/4. Catalyzes an early step in the biosynthesis of tetrapyrroles. Binds two molecules of 5-aminolevulinate per subunit, each at a distinct site, and catalyzes their condensation to form porphobilinogen. This Spinacia oleracea (Spinach) protein is Delta-aminolevulinic acid dehydratase, chloroplastic (HEMB).